Reading from the N-terminus, the 272-residue chain is MTEVRRRGRPGQAEPTAQKGAQALERGIAILQYLERSGGSSSVSDISGSLDLPLSTTFRLLKVLQAADFVYQDSQLGWWHIGLGVFNVGSAYIHNRDVLSVAGPFMHRLMLLSGETVNVAIRNGNEAVLIGQKECKSMVRMCAPLGSRLPLHASGAGKALLYPLTEEELVGIVVNTGLRRFTPTTLVDLPILLKNLEQAREQGYTVDQEEHVVGLNCIASAIYDDAGSVVAAISISGPASRLTEDRFISQGELVRDTAKDISTALGLKPPVA.

Residues 1–20 form a disordered region; sequence MTEVRRRGRPGQAEPTAQKG. Residues 21-83 form the HTH iclR-type domain; that stretch reads AQALERGIAI…SQLGWWHIGL (63 aa). The segment at residues 43-62 is a DNA-binding region (H-T-H motif); the sequence is VSDISGSLDLPLSTTFRLLK. The 170-residue stretch at 98 to 267 folds into the IclR-ED domain; that stretch reads VLSVAGPFMH…AKDISTALGL (170 aa). Glyoxylate-binding positions include 154–156, aspartate 207, cysteine 217, and 234–236; these read SGA and SIS.

Functionally, negative regulator of allantoin and glyoxylate utilization operons. Binds to the gcl promoter and to the allS-allA intergenic region. The protein is HTH-type transcriptional repressor AllR (allR) of Salmonella paratyphi A (strain ATCC 9150 / SARB42).